The sequence spans 270 residues: 3-methyl-2-oxobutanoate hydroxymethyltransferase (270 aa).

D50 and D89 together coordinate Mg(2+). Residues 50-51 (DS), D89, and K118 contribute to the 3-methyl-2-oxobutanoate site. E120 serves as a coordination point for Mg(2+). Residue E187 is the Proton acceptor of the active site.

This sequence belongs to the PanB family. In terms of assembly, homodecamer; pentamer of dimers. Requires Mg(2+) as cofactor.

Its subcellular location is the cytoplasm. The catalysed reaction is 3-methyl-2-oxobutanoate + (6R)-5,10-methylene-5,6,7,8-tetrahydrofolate + H2O = 2-dehydropantoate + (6S)-5,6,7,8-tetrahydrofolate. Its pathway is cofactor biosynthesis; (R)-pantothenate biosynthesis; (R)-pantoate from 3-methyl-2-oxobutanoate: step 1/2. Catalyzes the reversible reaction in which hydroxymethyl group from 5,10-methylenetetrahydrofolate is transferred onto alpha-ketoisovalerate to form ketopantoate. This is 3-methyl-2-oxobutanoate hydroxymethyltransferase from Helicobacter pylori (strain G27).